The following is a 163-amino-acid chain: Staphylokinase (163 aa).

A signal peptide spans 1 to 27; the sequence is MLKRSLLFLTVLLLLFSFSSITNEVSA.

This sequence belongs to the staphylokinase family.

It localises to the secreted. Its function is as follows. Potent plasminogen activator that converts plasminogen into plasmin. It forms a 1:1 complex with plasmin, which in turn activates other plasminogen molecules. The sequence is that of Staphylokinase (sak) from Staphylococcus aureus (strain MW2).